The chain runs to 111 residues: Ig kappa chain V-III region CBPC 101 (111 aa).

Residues 1 to 23 (DIVLTQSPASLAVSLGQRATISC) form a framework-1 region. A disulfide bond links cysteine 23 and cysteine 92. Positions 24-38 (KASQSVDYTGESYMN) are complementarity-determining-1. A framework-2 region spans residues 39–53 (WYQQNPGQSPKLLIY). Residues 54–60 (AASNLES) are complementarity-determining-2. Positions 61 to 92 (GIPARFSGSGSGTDFTLNIHPVEEEDAATYYC) are framework-3. A complementarity-determining-3 region spans residues 93–101 (QQSNEDPYT). Residues 102-111 (FGGGTKLEIK) are framework-4.

The chain is Ig kappa chain V-III region CBPC 101 from Mus musculus (Mouse).